Here is a 705-residue protein sequence, read N- to C-terminus: Polyribonucleotide nucleotidyltransferase (705 aa).

Aspartate 486 and aspartate 492 together coordinate Mg(2+). Residues 553-612 (PRIYKIKINPEKIKDVIGKGGSVIRMLTEKTKSSIEIEDDGTVKVISTDIKNAQCALKKI) form the KH domain. The S1 motif domain maps to 622-690 (NKIYVAKITR…RYGRIRLSFT (69 aa)).

It belongs to the polyribonucleotide nucleotidyltransferase family. In terms of assembly, component of the RNA degradosome, which is a multiprotein complex involved in RNA processing and mRNA degradation. It depends on Mg(2+) as a cofactor.

The protein localises to the cytoplasm. It carries out the reaction RNA(n+1) + phosphate = RNA(n) + a ribonucleoside 5'-diphosphate. In terms of biological role, involved in mRNA degradation. Catalyzes the phosphorolysis of single-stranded polyribonucleotides processively in the 3'- to 5'-direction. The protein is Polyribonucleotide nucleotidyltransferase of Wigglesworthia glossinidia brevipalpis.